We begin with the raw amino-acid sequence, 595 residues long: Actin-histidine N-methyltransferase (595 aa).

Residues 1–22 (MGKKSRVKTQKSGTGATATVSP) form a disordered region. A compositionally biased stretch (polar residues) spans 10–20 (QKSGTGATATV). Residues R75, 104-106 (EGF), R254, 275-279 (DMCNH), and 325-327 (SGF) each bind S-adenosyl-L-methionine. The 221-residue stretch at 94–314 (EGFEMVNFKE…AGEQIYIFYG (221 aa)) folds into the SET domain. Phosphoserine is present on S513. The segment covering 549–563 (ENGLVNGENSIPNGT) has biased composition (polar residues). The segment at 549–595 (ENGLVNGENSIPNGTRSEDENLNQEESKRAVEDAKGSSSDRADAVKE) is disordered. Basic and acidic residues predominate over residues 573-595 (EESKRAVEDAKGSSSDRADAVKE).

Belongs to the class V-like SAM-binding methyltransferase superfamily. SETD3 actin-histidine methyltransferase family. Interacts with MYOD1. In terms of processing, phosphorylated by GSK3B, which is required for recognition by the SCF(FBXW7) complex and subsequent degradation. Ubiquitinated by the SCF(FBXW7) complex following phosphorylation by GSK3B, leading to its degradation by the proteasome.

Its subcellular location is the cytoplasm. It localises to the nucleus. It carries out the reaction L-histidyl-[protein] + S-adenosyl-L-methionine = N(tele)-methyl-L-histidyl-[protein] + S-adenosyl-L-homocysteine + H(+). Its function is as follows. Protein-histidine N-methyltransferase that specifically mediates 3-methylhistidine (tele-methylhistidine) methylation of actin at 'His-73'. Histidine methylation of actin is required for smooth muscle contraction of the laboring uterus during delivery. Does not have protein-lysine N-methyltransferase activity and probably only catalyzes histidine methylation of actin. In Callithrix jacchus (White-tufted-ear marmoset), this protein is Actin-histidine N-methyltransferase.